The following is a 684-amino-acid chain: Glycine--tRNA ligase beta subunit (684 aa).

It belongs to the class-II aminoacyl-tRNA synthetase family. In terms of assembly, tetramer of two alpha and two beta subunits.

The protein resides in the cytoplasm. The catalysed reaction is tRNA(Gly) + glycine + ATP = glycyl-tRNA(Gly) + AMP + diphosphate. The protein is Glycine--tRNA ligase beta subunit of Pseudomonas putida (strain ATCC 47054 / DSM 6125 / CFBP 8728 / NCIMB 11950 / KT2440).